Reading from the N-terminus, the 189-residue chain is Flavin prenyltransferase UbiX (189 aa).

Residues 10–12, S36, 91–94, and R126 each bind FMN; these read GAS and STNT. Residues Y156 and K172 each coordinate dimethylallyl phosphate.

Belongs to the UbiX/PAD1 family.

The catalysed reaction is dimethylallyl phosphate + FMNH2 = prenylated FMNH2 + phosphate. Functionally, flavin prenyltransferase that catalyzes the synthesis of the prenylated FMN cofactor (prenyl-FMN) for 4-hydroxy-3-polyprenylbenzoic acid decarboxylase UbiD. The prenyltransferase is metal-independent and links a dimethylallyl moiety from dimethylallyl monophosphate (DMAP) to the flavin N5 and C6 atoms of FMN. This is Flavin prenyltransferase UbiX from Aquifex aeolicus (strain VF5).